We begin with the raw amino-acid sequence, 388 residues long: Leucine aminopeptidase 1 (388 aa).

The first 19 residues, 1–19 (MKSLSLLALAAIAPPAAVA), serve as a signal peptide directing secretion. Residues 20 to 88 (AVVDHQVPFE…SVKSHERIQV (69 aa)) constitute a propeptide that is removed on maturation. Asn-180 carries an N-linked (GlcNAc...) asparagine glycan. Zn(2+) contacts are provided by His-188, Asp-207, Glu-246, and Asp-273. Cys-322 and Cys-326 form a disulfide bridge. His-355 is a Zn(2+) binding site.

The protein belongs to the peptidase M28 family. M28E subfamily. As to quaternary structure, monomer. The cofactor is Zn(2+).

The protein localises to the secreted. Extracellular aminopeptidase that allows assimilation of proteinaceous substrates. The sequence is that of Leucine aminopeptidase 1 (LAP1) from Coccidioides posadasii (strain RMSCC 757 / Silveira) (Valley fever fungus).